Consider the following 122-residue polypeptide: Biogenesis of lysosome-related organelles complex 1 subunit BLS1 (122 aa).

Ser-33 carries the phosphoserine modification.

Belongs to the BLOC1S1 family. In terms of assembly, component of the biogenesis of lysosome-related organelles complex-1 (BLOC-1) composed of at least BLI1, BLS1, CNL1, KXD1, SNN1 and VAB2.

Its subcellular location is the endosome. In terms of biological role, component of the biogenesis of lysosome-related organelles complex-1 (BLOC-1), a complex involved in endosomal cargo sorting. This chain is Biogenesis of lysosome-related organelles complex 1 subunit BLS1 (BLS1), found in Saccharomyces cerevisiae (strain RM11-1a) (Baker's yeast).